We begin with the raw amino-acid sequence, 310 residues long: Quinolinate synthase (310 aa).

Iminosuccinate contacts are provided by H27 and S44. C89 is a binding site for [4Fe-4S] cluster. Residues 115–117 (YVN) and S132 each bind iminosuccinate. C175 provides a ligand contact to [4Fe-4S] cluster. Iminosuccinate contacts are provided by residues 201–203 (HPE) and T222. Residue C267 participates in [4Fe-4S] cluster binding.

The protein belongs to the quinolinate synthase family. Type 2 subfamily. The cofactor is [4Fe-4S] cluster.

It is found in the cytoplasm. The enzyme catalyses iminosuccinate + dihydroxyacetone phosphate = quinolinate + phosphate + 2 H2O + H(+). It functions in the pathway cofactor biosynthesis; NAD(+) biosynthesis; quinolinate from iminoaspartate: step 1/1. In terms of biological role, catalyzes the condensation of iminoaspartate with dihydroxyacetone phosphate to form quinolinate. The protein is Quinolinate synthase of Thermus thermophilus (strain ATCC 27634 / DSM 579 / HB8).